Consider the following 106-residue polypeptide: Phosphoribosyl-ATP pyrophosphatase (106 aa).

Belongs to the PRA-PH family.

The protein resides in the cytoplasm. It catalyses the reaction 1-(5-phospho-beta-D-ribosyl)-ATP + H2O = 1-(5-phospho-beta-D-ribosyl)-5'-AMP + diphosphate + H(+). It participates in amino-acid biosynthesis; L-histidine biosynthesis; L-histidine from 5-phospho-alpha-D-ribose 1-diphosphate: step 2/9. The polypeptide is Phosphoribosyl-ATP pyrophosphatase (Lactiplantibacillus plantarum (strain ATCC BAA-793 / NCIMB 8826 / WCFS1) (Lactobacillus plantarum)).